The sequence spans 221 residues: DNA repair and recombination protein RadB (221 aa).

It belongs to the eukaryotic RecA-like protein family. RadB subfamily.

In terms of biological role, involved in DNA repair and in homologous recombination. May regulate the cleavage reactions of the branch-structured DNA. Has a very weak ATPase activity that is not stimulated by DNA. Binds DNA but does not promote DNA strands exchange. This Thermococcus gammatolerans (strain DSM 15229 / JCM 11827 / EJ3) protein is DNA repair and recombination protein RadB.